The chain runs to 104 residues: Large ribosomal subunit protein bL21 (104 aa).

It belongs to the bacterial ribosomal protein bL21 family. Part of the 50S ribosomal subunit. Contacts protein L20.

Its function is as follows. This protein binds to 23S rRNA in the presence of protein L20. In Lactococcus lactis subsp. lactis (strain IL1403) (Streptococcus lactis), this protein is Large ribosomal subunit protein bL21.